A 145-amino-acid polypeptide reads, in one-letter code: Transcription antitermination protein NusB (145 aa).

Belongs to the NusB family.

Functionally, involved in transcription antitermination. Required for transcription of ribosomal RNA (rRNA) genes. Binds specifically to the boxA antiterminator sequence of the ribosomal RNA (rrn) operons. This is Transcription antitermination protein NusB from Ruminiclostridium cellulolyticum (strain ATCC 35319 / DSM 5812 / JCM 6584 / H10) (Clostridium cellulolyticum).